The sequence spans 648 residues: MAGKRVLVIDNGSYECRVGWSDSKEPDLRFRNVLTKPRKDRKKEAAASEGSASQTTVEQSAEIQVGNDITNIEAVRAHLKSPFERNVITNWNHQEQIFDYIFTKMGFDGQDKIDHPIILTEALANPNFCRQQMNELLFECYGIPSVSYGIDALYSWKHHQQKQKNISDALIISFGYSTTHVIPVLDGKLQLEHVRRLNVGGYHIITYLFRLMQMKYPVHLNAITISRMEKLVHEHCHIAVDYKEELVQWAQMDYYDEHIMKIQLPYNAVTATNAMLTAEQKQEKRRELAHRLLDIKKNREQEKLREDEQQLFVYNKLRQLYEQKKLDKFERALQQQQIGTLEDLDSLIATINSRIKRAQERAQSGPRPSKQQERLNKMPKPPEGMSQADWLAELQGKREKILGRKQARQQQRSEQAKRHTHAAQERMRIISSLAKNEKRRKANGEEEDDGFGMNDNDWDVYKRINRYNDDSDSDADNEKLMQFDKILNHYDANTDGNSNVPPQSAAENYQLHFGVENIRVPEVLFQPSMIGCSEAGLAELIAFVLKLFPAAEQQRLVEHVYLTGGCAQFKGLKERLIKELMEMRPFQSKFAIYESDEPTLSAWLGACVHAGEPTFGQTLTTRQDHQEHGREFFREHTASNIFYPTPKD.

Positions 34 to 59 (LTKPRKDRKKEAAASEGSASQTTVEQ) are disordered. 2 coiled-coil regions span residues 277–311 (TAEQKQEKRRELAHRLLDIKKNREQEKLREDEQQL) and 340–364 (TLEDLDSLIATINSRIKRAQERAQS). Disordered regions lie at residues 357 to 385 (RAQERAQSGPRPSKQQERLNKMPKPPEGM) and 403 to 455 (GRKQ…GMND). Over residues 414 to 428 (EQAKRHTHAAQERMR) the composition is skewed to basic and acidic residues. 2 positions are modified to phosphoserine: serine 471 and serine 473.

It belongs to the actin family. ARP5 subfamily. Component of the chromatin remodeling Ino80 complex.

The protein localises to the nucleus. In terms of biological role, proposed core component of the chromatin remodeling Ino80 complex which is involved in transcriptional regulation, DNA replication and probably DNA repair. This chain is Actin-related protein 5, found in Drosophila melanogaster (Fruit fly).